The following is a 199-amino-acid chain: Guanylate kinase (199 aa).

The Guanylate kinase-like domain occupies 20–198; it reads GKLIILTGPS…ALQAIEVALF (179 aa). Residue 27–34 coordinates ATP; that stretch reads GPSGVGKG.

Belongs to the guanylate kinase family.

The protein localises to the cytoplasm. The catalysed reaction is GMP + ATP = GDP + ADP. Functionally, essential for recycling GMP and indirectly, cGMP. The chain is Guanylate kinase from Nostoc sp. (strain PCC 7120 / SAG 25.82 / UTEX 2576).